The following is a 381-amino-acid chain: Alkanesulfonate monooxygenase (381 aa).

It belongs to the SsuD family. Homotetramer.

The catalysed reaction is an alkanesulfonate + FMNH2 + O2 = an aldehyde + FMN + sulfite + H2O + 2 H(+). Catalyzes the desulfonation of aliphatic sulfonates. This Escherichia coli O127:H6 (strain E2348/69 / EPEC) protein is Alkanesulfonate monooxygenase.